Consider the following 342-residue polypeptide: uncharacterized protein (342 aa).

Residues 1-18 form the signal peptide; that stretch reads MWKKLMLLLLMAIPLVSA.

This is an uncharacterized protein from Methanocaldococcus jannaschii (strain ATCC 43067 / DSM 2661 / JAL-1 / JCM 10045 / NBRC 100440) (Methanococcus jannaschii).